The sequence spans 240 residues: UDP-2,3-diacylglucosamine hydrolase (240 aa).

The Mn(2+) site is built by Asp8, His10, Asp41, Asn79, and His114. 79–80 (NR) lines the substrate pocket. Asp122, Ser160, Asn164, Lys167, and His195 together coordinate substrate. His195 and His197 together coordinate Mn(2+).

Belongs to the LpxH family. Mn(2+) serves as cofactor.

The protein resides in the cell inner membrane. It carries out the reaction UDP-2-N,3-O-bis[(3R)-3-hydroxytetradecanoyl]-alpha-D-glucosamine + H2O = 2-N,3-O-bis[(3R)-3-hydroxytetradecanoyl]-alpha-D-glucosaminyl 1-phosphate + UMP + 2 H(+). It functions in the pathway glycolipid biosynthesis; lipid IV(A) biosynthesis; lipid IV(A) from (3R)-3-hydroxytetradecanoyl-[acyl-carrier-protein] and UDP-N-acetyl-alpha-D-glucosamine: step 4/6. Hydrolyzes the pyrophosphate bond of UDP-2,3-diacylglucosamine to yield 2,3-diacylglucosamine 1-phosphate (lipid X) and UMP by catalyzing the attack of water at the alpha-P atom. Involved in the biosynthesis of lipid A, a phosphorylated glycolipid that anchors the lipopolysaccharide to the outer membrane of the cell. The protein is UDP-2,3-diacylglucosamine hydrolase of Escherichia fergusonii (strain ATCC 35469 / DSM 13698 / CCUG 18766 / IAM 14443 / JCM 21226 / LMG 7866 / NBRC 102419 / NCTC 12128 / CDC 0568-73).